Consider the following 265-residue polypeptide: MSKITALFKELKASGKKGLIPFITAGDPDPKLTVELMHALVRGGSSVIELGVPFSDPMADGPVIQRSSERALTQGVTLHSCLDMVKEFRKKDATTPVVLMGYANPVEQMGAERFATEAKAAGVDGVLIVDYPPEECVDFAARMRVAGIDPIFLLAPTSSHERIKEAAKIASGYIYYVSMRGVTGASHLNTQDVASIIPKIREETDIPIAVGFGINDAASAKAVSVSADAVVIGSRIIRLLEDAPPGQAVQSLETFIREIRDALDS.

Residues Glu49 and Asp60 each act as proton acceptor in the active site.

It belongs to the TrpA family. Tetramer of two alpha and two beta chains.

The enzyme catalyses (1S,2R)-1-C-(indol-3-yl)glycerol 3-phosphate + L-serine = D-glyceraldehyde 3-phosphate + L-tryptophan + H2O. It functions in the pathway amino-acid biosynthesis; L-tryptophan biosynthesis; L-tryptophan from chorismate: step 5/5. In terms of biological role, the alpha subunit is responsible for the aldol cleavage of indoleglycerol phosphate to indole and glyceraldehyde 3-phosphate. The polypeptide is Tryptophan synthase alpha chain (Polynucleobacter asymbioticus (strain DSM 18221 / CIP 109841 / QLW-P1DMWA-1) (Polynucleobacter necessarius subsp. asymbioticus)).